A 156-amino-acid polypeptide reads, in one-letter code: Small ribosomal subunit protein uS7 (156 aa).

The protein belongs to the universal ribosomal protein uS7 family. In terms of assembly, part of the 30S ribosomal subunit. Contacts proteins S9 and S11.

In terms of biological role, one of the primary rRNA binding proteins, it binds directly to 16S rRNA where it nucleates assembly of the head domain of the 30S subunit. Is located at the subunit interface close to the decoding center, probably blocks exit of the E-site tRNA. The protein is Small ribosomal subunit protein uS7 of Aliivibrio fischeri (strain MJ11) (Vibrio fischeri).